The primary structure comprises 471 residues: Probable flavin-containing monoamine oxidase B (471 aa).

The residue at position 406 (Cys-406) is an S-8alpha-FAD cysteine.

The protein belongs to the flavin monoamine oxidase family. FAD serves as cofactor.

It catalyses the reaction a secondary aliphatic amine + O2 + H2O = a primary amine + an aldehyde + H2O2. This Dictyostelium discoideum (Social amoeba) protein is Probable flavin-containing monoamine oxidase B (maoB-1).